Here is a 923-residue protein sequence, read N- to C-terminus: Hexokinase-3 (923 aa).

Positions 1–18 are enriched in polar residues; that stretch reads MDSIGSSGLRQGEETLSC. The interval 1-30 is disordered; that stretch reads MDSIGSSGLRQGEETLSCSEEGLPGPSDSS. Hexokinase domains follow at residues 27-471 and 477-912; these read SDSS…MVTA and AAHR…LVTA. The interval 84 to 220 is hexokinase small subdomain 1; sequence HGTEQGDFVV…AYNIDVVAVV (137 aa). 95-102 lines the ATP pocket; sequence ELGATGAS. 95-104 serves as a coordination point for D-glucose 6-phosphate; that stretch reads ELGATGASLR. D-glucose is bound by residues Ser-168, 185-186, and 221-222; these read TK and ND. The tract at residues 221–460 is hexokinase large subdomain 1; that stretch reads NDTVGTMMGC…CDVSLIPSVD (240 aa). D-glucose 6-phosphate is bound by residues Asp-222 and Thr-245. D-glucose is bound by residues Asn-248, Glu-273, and 304–307; that span reads QRFE. 426 to 428 lines the D-glucose 6-phosphate pocket; it reads GGR. ATP is bound by residues 438–439 and 542–547; these read SV and DLGGTN. Residues 531-661 form a hexokinase small subdomain 2 region; that stretch reads DGSERGDFLA…AVELNVVAIV (131 aa). Position 542 to 546 (542 to 546) interacts with D-glucose 6-phosphate; it reads DLGGT. D-glucose contacts are provided by residues 609 to 610, 626 to 627, and 662 to 663; these read SF, TK, and ND. The hexokinase large subdomain 2 stretch occupies residues 662–901; the sequence is NDTVGTMMSC…CVVTFLQSED (240 aa). Positions 663 and 686 each coordinate D-glucose 6-phosphate. Thr-686 lines the ATP pocket. D-glucose is bound by residues 688-689, Glu-714, and Glu-748; that span reads TN. Residues 753 to 754, 790 to 794, and 869 to 873 contribute to the ATP site; these read GM, TKFLS, and TLYKL. Residues 867-869 and Ser-903 contribute to the D-glucose 6-phosphate site; that span reads DGT.

This sequence belongs to the hexokinase family.

The catalysed reaction is a D-hexose + ATP = a D-hexose 6-phosphate + ADP + H(+). It catalyses the reaction D-fructose + ATP = D-fructose 6-phosphate + ADP + H(+). The enzyme catalyses D-glucose + ATP = D-glucose 6-phosphate + ADP + H(+). It participates in carbohydrate metabolism; hexose metabolism. Its pathway is carbohydrate degradation; glycolysis; D-glyceraldehyde 3-phosphate and glycerone phosphate from D-glucose: step 1/4. Its activity is regulated as follows. Hexokinase is an allosteric enzyme inhibited by its product D-glucose 6-phosphate. Catalyzes the phosphorylation of hexose, such as D-glucose and D-fructose, to hexose 6-phosphate (D-glucose 6-phosphate and D-fructose 6-phosphate, respectively). Mediates the initial step of glycolysis by catalyzing phosphorylation of D-glucose to D-glucose 6-phosphate. This Homo sapiens (Human) protein is Hexokinase-3.